We begin with the raw amino-acid sequence, 220 residues long: Adenylate kinase (220 aa).

10–15 (GAGKGT) serves as a coordination point for ATP. The tract at residues 30–59 (STGDMLRAAVKAGTPLGVEAKGYMDAGKLV) is NMP. Residues T31, R36, 57 to 59 (KLV), 85 to 88 (GFPR), and Q92 each bind AMP. The tract at residues 122–159 (GRRTHPASGRTYHVKFNPPKVEGHDDVTGEPLIQRDDD) is LID. Residues R123 and 132 to 133 (TY) each bind ATP. R156 and R167 together coordinate AMP. ATP is bound at residue G206.

This sequence belongs to the adenylate kinase family. Monomer.

It is found in the cytoplasm. The enzyme catalyses AMP + ATP = 2 ADP. The protein operates within purine metabolism; AMP biosynthesis via salvage pathway; AMP from ADP: step 1/1. Its function is as follows. Catalyzes the reversible transfer of the terminal phosphate group between ATP and AMP. Plays an important role in cellular energy homeostasis and in adenine nucleotide metabolism. This chain is Adenylate kinase, found in Burkholderia lata (strain ATCC 17760 / DSM 23089 / LMG 22485 / NCIMB 9086 / R18194 / 383).